Consider the following 409-residue polypeptide: Multidrug resistance protein MdtG (409 aa).

10 helical membrane passes run 16–36 (LIVA…VMPF), 58–78 (IVFS…GGLA), 92–112 (LGMG…QFLI), 115–135 (ALLG…ATQV), 146–166 (TLST…GLLA), 173–193 (PVFF…LFCI), 224–244 (LFVT…ILTL), 256–276 (VAFI…LLSA), 291–311 (ILIT…YVQT), and 379–399 (AVFL…WNSL).

Belongs to the major facilitator superfamily. DHA1 family. MdtG (TC 2.A.1.2.20) subfamily.

It localises to the cell inner membrane. In terms of biological role, confers resistance to fosfomycin and deoxycholate. The chain is Multidrug resistance protein MdtG from Escherichia coli O9:H4 (strain HS).